We begin with the raw amino-acid sequence, 148 residues long: FAD synthase (148 aa).

Residues 11–12 (TF), 16–19 (HPGH), asparagine 94, and tyrosine 121 contribute to the ATP site.

Belongs to the archaeal FAD synthase family. In terms of assembly, homodimer. A divalent metal cation serves as cofactor.

It carries out the reaction FMN + ATP + H(+) = FAD + diphosphate. Its pathway is cofactor biosynthesis; FAD biosynthesis; FAD from FMN: step 1/1. Its function is as follows. Catalyzes the transfer of the AMP portion of ATP to flavin mononucleotide (FMN) to produce flavin adenine dinucleotide (FAD) coenzyme. The sequence is that of FAD synthase from Methanoregula boonei (strain DSM 21154 / JCM 14090 / 6A8).